A 475-amino-acid chain; its full sequence is Protein FIZZY-RELATED 1 (475 aa).

The disordered stretch occupies residues 1 to 27 (MEEDESTTPKKKSDSQLNLPPSMNRPT). A compositionally biased stretch (polar residues) spans 15-27 (SQLNLPPSMNRPT). WD repeat units lie at residues 166-203 (QDDFYLNLVDWSAQNVLAVGLGNCVYLWNACSSKVTKL), 207-246 (GVDETVCSVGWALRGTHLAIGTSSGTVQIWDVLRCKNIRT), 249-289 (GHRL…SKLK), 290-329 (GHKSEICGLKWSSDNRELASGGNDNKLFVWNQHSTQPVLR), 332-374 (EHAA…HLNC), 376-417 (DTNS…KLAT), and 420-459 (GHSYRVLYLAVSPDGQTIVTGAGDETLRFWNVFPSPKSQS).

Belongs to the WD repeat CDC20/Fizzy family. As to quaternary structure, associates with the APC/C complex. Interacts with CDC20-1, CDC20-2, CYCA1-1, CYCA1-2, CYCA3-4, CYCB1-1 and CYCB1-2. Binds to GIG1. In terms of tissue distribution, expressed in the root tip, predominantly in the root cap, quiescent center cells, surrounding stem cells and columella.

Its subcellular location is the nucleus. Its pathway is protein modification; protein ubiquitination. In terms of biological role, activator protein that regulates the ubiquitin ligase activity and substrate specificity of the anaphase promoting complex/cyclosome (APC/C). Required for meristem organization and maintenance of quiescent center identity and stem cells. This Arabidopsis thaliana (Mouse-ear cress) protein is Protein FIZZY-RELATED 1 (FZR1).